A 61-amino-acid chain; its full sequence is Small ribosomal subunit protein uS14 (61 aa).

Positions 24, 27, 40, and 43 each coordinate Zn(2+).

It belongs to the universal ribosomal protein uS14 family. Zinc-binding uS14 subfamily. Part of the 30S ribosomal subunit. Contacts proteins S3 and S10. It depends on Zn(2+) as a cofactor.

Its function is as follows. Binds 16S rRNA, required for the assembly of 30S particles and may also be responsible for determining the conformation of the 16S rRNA at the A site. The chain is Small ribosomal subunit protein uS14 from Campylobacter lari (strain RM2100 / D67 / ATCC BAA-1060).